The following is a 200-amino-acid chain: ATP-dependent Clp protease proteolytic subunit 3 (200 aa).

Ser-101 serves as the catalytic Nucleophile. His-126 is an active-site residue.

It belongs to the peptidase S14 family. Fourteen ClpP subunits assemble into 2 heptameric rings which stack back to back to give a disk-like structure with a central cavity, resembling the structure of eukaryotic proteasomes.

Its subcellular location is the cytoplasm. The enzyme catalyses Hydrolysis of proteins to small peptides in the presence of ATP and magnesium. alpha-casein is the usual test substrate. In the absence of ATP, only oligopeptides shorter than five residues are hydrolyzed (such as succinyl-Leu-Tyr-|-NHMec, and Leu-Tyr-Leu-|-Tyr-Trp, in which cleavage of the -Tyr-|-Leu- and -Tyr-|-Trp bonds also occurs).. Its function is as follows. Cleaves peptides in various proteins in a process that requires ATP hydrolysis. Has a chymotrypsin-like activity. Plays a major role in the degradation of misfolded proteins. This chain is ATP-dependent Clp protease proteolytic subunit 3, found in Synechococcus sp. (strain CC9605).